The following is a 99-amino-acid chain: Prostate and testis expressed protein 4 (99 aa).

The N-terminal stretch at 1–23 (MNSVTKISTLLIVILSFLCFVEG) is a signal peptide. Residues 24-99 (LICNSCEKSR…CCEKNLCNSF (76 aa)) form the UPAR/Ly6 domain. 4 disulfides stabilise this stretch: Cys26–Cys52, Cys29–Cys37, Cys44–Cys70, and Cys74–Cys90.

In terms of tissue distribution, expressed in prostate, testis, eye, kidney and skeletal muscle. Expressed in the dorsal lobe of prostate. Not expressed in the ventral lobe of prostate.

Its subcellular location is the secreted. Functionally, enhances sperm motility. Binds to calmodulin and inhibits calcium transport into spermatozoa. May modulate the function of nicotinic acetylcholine receptors. The sequence is that of Prostate and testis expressed protein 4 (Pate4) from Mus musculus (Mouse).